Consider the following 691-residue polypeptide: DNA ligase (691 aa).

NAD(+) is bound by residues 41-45 (DAEFD), 91-92 (SL), and E121. Residue K123 is the N6-AMP-lysine intermediate of the active site. NAD(+)-binding residues include R144, E184, K300, and K324. 4 residues coordinate Zn(2+): C418, C421, C437, and C443. Residues 607–691 (SVPRTLAGLT…LLADGPASRT (85 aa)) enclose the BRCT domain.

The protein belongs to the NAD-dependent DNA ligase family. LigA subfamily. The cofactor is Mg(2+). Requires Mn(2+) as cofactor.

It catalyses the reaction NAD(+) + (deoxyribonucleotide)n-3'-hydroxyl + 5'-phospho-(deoxyribonucleotide)m = (deoxyribonucleotide)n+m + AMP + beta-nicotinamide D-nucleotide.. DNA ligase that catalyzes the formation of phosphodiester linkages between 5'-phosphoryl and 3'-hydroxyl groups in double-stranded DNA using NAD as a coenzyme and as the energy source for the reaction. It is essential for DNA replication and repair of damaged DNA. The sequence is that of DNA ligase from Mycobacterium tuberculosis (strain ATCC 25177 / H37Ra).